Here is a 229-residue protein sequence, read N- to C-terminus: Potassium/proton antiporter CemA (229 aa).

The next 4 helical transmembrane spans lie at 7 to 27 (FTSL…SLSF), 114 to 134 (IICF…LVIL), 145 to 165 (LSDT…IGFH), and 189 to 209 (ILSS…KFWV).

The protein belongs to the CemA family.

The protein resides in the plastid. It localises to the chloroplast inner membrane. The catalysed reaction is K(+)(in) + H(+)(out) = K(+)(out) + H(+)(in). Functionally, contributes to K(+)/H(+) antiport activity by supporting proton efflux to control proton extrusion and homeostasis in chloroplasts in a light-dependent manner to modulate photosynthesis. Prevents excessive induction of non-photochemical quenching (NPQ) under continuous-light conditions. Indirectly promotes efficient inorganic carbon uptake into chloroplasts. This Daucus carota (Wild carrot) protein is Potassium/proton antiporter CemA.